The following is a 248-amino-acid chain: UPF0651 protein YPL107W, mitochondrial (248 aa).

The transit peptide at 1 to 26 (MIRNQGWSLLYRIYPVRRFTRYSRVD) directs the protein to the mitochondrion. Residues 69-116 (KKIAGVQVPAKPQEPDNCCMSGCVNCVWEIYSEDLRDWKHRRKEAAEK) enclose the Oxidoreductase-like domain.

Belongs to the UPF0651 family.

It localises to the mitochondrion. This Saccharomyces cerevisiae (strain ATCC 204508 / S288c) (Baker's yeast) protein is UPF0651 protein YPL107W, mitochondrial.